A 248-amino-acid polypeptide reads, in one-letter code: Aquaporin Z (248 aa).

Helical transmembrane passes span 11–31 (FIGT…AAAF) and 36–56 (IGFA…AFAI). The NPA 1 motif lies at 65–67 (NPA). Transmembrane regions (helical) follow at residues 87 to 107 (IAAQ…IAGG), 132 to 152 (LLAC…IILG), and 161 to 181 (GFAP…SIPV). An NPA 2 motif is present at residues 187-189 (NPA). The chain crosses the membrane as a helical span at residues 203–223 (IAELWLFWLAPIVGAALAGLF).

This sequence belongs to the MIP/aquaporin (TC 1.A.8) family. As to quaternary structure, homotetramer.

The protein localises to the cell inner membrane. The catalysed reaction is H2O(in) = H2O(out). Channel that permits osmotically driven movement of water in both directions. It is involved in the osmoregulation and in the maintenance of cell turgor during volume expansion in rapidly growing cells. It mediates rapid entry or exit of water in response to abrupt changes in osmolarity. The chain is Aquaporin Z from Gloeobacter violaceus (strain ATCC 29082 / PCC 7421).